The primary structure comprises 494 residues: Protein translocase subunit SecD (494 aa).

A run of 6 helical transmembrane segments spans residues 7–27, 322–342, 345–365, 372–392, 420–440, and 441–461; these read WFAL…NLPF, LIAA…FYRL, FIAI…YALI, PGVA…VLIF, IIDG…LGTG, and FVKG…FTAL.

This sequence belongs to the SecD/SecF family. SecD subfamily. In terms of assembly, forms a complex with SecF. Part of the essential Sec protein translocation apparatus which comprises SecA, SecYEG and auxiliary proteins SecDF. Other proteins may also be involved.

The protein localises to the cell inner membrane. Part of the Sec protein translocase complex. Interacts with the SecYEG preprotein conducting channel. SecDF uses the proton motive force (PMF) to complete protein translocation after the ATP-dependent function of SecA. In terms of biological role, probably participates in protein translocation into and across both the cytoplasmic and thylakoid membranes in cyanobacterial cells. This Prochlorococcus marinus (strain SARG / CCMP1375 / SS120) protein is Protein translocase subunit SecD.